A 269-amino-acid chain; its full sequence is Dermonecrotic toxin SpeSicTox-betaIB3 (269 aa).

His-5 is a catalytic residue. Mg(2+) contacts are provided by Glu-25 and Asp-27. The active-site Nucleophile is the His-41. 2 cysteine pairs are disulfide-bonded: Cys-45–Cys-51 and Cys-47–Cys-191. Asp-85 is a Mg(2+) binding site.

The protein belongs to the arthropod phospholipase D family. Class II subfamily. It depends on Mg(2+) as a cofactor. Expressed by the venom gland.

The protein resides in the secreted. It carries out the reaction an N-(acyl)-sphingosylphosphocholine = an N-(acyl)-sphingosyl-1,3-cyclic phosphate + choline. The enzyme catalyses an N-(acyl)-sphingosylphosphoethanolamine = an N-(acyl)-sphingosyl-1,3-cyclic phosphate + ethanolamine. The catalysed reaction is a 1-acyl-sn-glycero-3-phosphocholine = a 1-acyl-sn-glycero-2,3-cyclic phosphate + choline. It catalyses the reaction a 1-acyl-sn-glycero-3-phosphoethanolamine = a 1-acyl-sn-glycero-2,3-cyclic phosphate + ethanolamine. Dermonecrotic toxins cleave the phosphodiester linkage between the phosphate and headgroup of certain phospholipids (sphingolipid and lysolipid substrates), forming an alcohol (often choline) and a cyclic phosphate. This toxin acts on sphingomyelin (SM). It may also act on ceramide phosphoethanolamine (CPE), lysophosphatidylcholine (LPC) and lysophosphatidylethanolamine (LPE), but not on lysophosphatidylserine (LPS), and lysophosphatidylglycerol (LPG). It acts by transphosphatidylation, releasing exclusively cyclic phosphate products as second products. Induces dermonecrosis, hemolysis, increased vascular permeability, edema, inflammatory response, and platelet aggregation. In Sicarius peruensis (Six-eyed sand spider), this protein is Dermonecrotic toxin SpeSicTox-betaIB3.